A 637-amino-acid chain; its full sequence is Chaperone protein DnaK (637 aa).

Thr-198 bears the Phosphothreonine; by autocatalysis mark. The tract at residues 597-637 (MYQQQAEGDAARDAAQDAAKDDVVDAEFTEVDDDKNDKKSA) is disordered. The span at 605–619 (DAARDAAQDAAKDDV) shows a compositional bias: basic and acidic residues. Positions 620-630 (VDAEFTEVDDD) are enriched in acidic residues.

This sequence belongs to the heat shock protein 70 family.

Its function is as follows. Acts as a chaperone. This Afipia carboxidovorans (strain ATCC 49405 / DSM 1227 / KCTC 32145 / OM5) (Oligotropha carboxidovorans) protein is Chaperone protein DnaK.